The primary structure comprises 201 residues: Protein TV1384 (201 aa).

An AMMECR1 domain is found at Asp11 to Gln200.

The chain is Protein TV1384 from Thermoplasma volcanium (strain ATCC 51530 / DSM 4299 / JCM 9571 / NBRC 15438 / GSS1).